The sequence spans 212 residues: Interleukin-6 (212 aa).

Positions 1-29 (MNSFSTSAFGPVAFSLGLLLVLPAAFPAP) are cleaved as a signal peptide. Cysteine 72 and cysteine 78 form a disulfide bridge. Residue asparagine 73 is glycosylated (N-linked (GlcNAc...) asparagine). A Phosphoserine; by FAM20C modification is found at serine 81. Cysteine 101 and cysteine 111 form a disulfide bridge.

Belongs to the IL-6 superfamily. As to quaternary structure, component of a hexamer of two molecules each of IL6, IL6R and IL6ST; first binds to IL6R to associate with the signaling subunit IL6ST. Interacts with IL6R (via the N-terminal ectodomain); this interaction may be affected by IL6R-binding with SORL1, hence decreasing IL6 cis signaling. Interacts with SORL1 (via the N-terminal ectodomain); this interaction leads to IL6 internalization and lysosomal degradation. May form a trimeric complex with the soluble SORL1 ectodomain and soluble IL6R receptor; this interaction might stabilize circulating IL6, hence promoting IL6 trans signaling. In terms of processing, N- and O-glycosylated. Produced by skeletal muscle.

The protein resides in the secreted. In terms of biological role, cytokine with a wide variety of biological functions in immunity, tissue regeneration, and metabolism. Binds to IL6R, then the complex associates to the signaling subunit IL6ST/gp130 to trigger the intracellular IL6-signaling pathway. The interaction with the membrane-bound IL6R and IL6ST stimulates 'classic signaling', whereas the binding of IL6 and soluble IL6R to IL6ST stimulates 'trans-signaling'. Alternatively, 'cluster signaling' occurs when membrane-bound IL6:IL6R complexes on transmitter cells activate IL6ST receptors on neighboring receiver cells. IL6 is a potent inducer of the acute phase response. Rapid production of IL6 contributes to host defense during infection and tissue injury, but excessive IL6 synthesis is involved in disease pathology. In the innate immune response, is synthesized by myeloid cells, such as macrophages and dendritic cells, upon recognition of pathogens through toll-like receptors (TLRs) at the site of infection or tissue injury. In the adaptive immune response, is required for the differentiation of B cells into immunoglobulin-secreting cells. Plays a major role in the differentiation of CD4(+) T cell subsets. Essential factor for the development of T follicular helper (Tfh) cells that are required for the induction of germinal-center formation. Required to drive naive CD4(+) T cells to the Th17 lineage. Also required for proliferation of myeloma cells and the survival of plasmablast cells. Functionally, acts as an essential factor in bone homeostasis and on vessels directly or indirectly by induction of VEGF, resulting in increased angiogenesis activity and vascular permeability. Induces, through 'trans-signaling' and synergistically with IL1B and TNF, the production of VEGF. Involved in metabolic controls, is discharged into the bloodstream after muscle contraction increasing lipolysis and improving insulin resistance. 'Trans-signaling' in central nervous system also regulates energy and glucose homeostasis. Mediates, through GLP-1, crosstalk between insulin-sensitive tissues, intestinal L cells and pancreatic islets to adapt to changes in insulin demand. Also acts as a myokine. Plays a protective role during liver injury, being required for maintenance of tissue regeneration. Also has a pivotal role in iron metabolism by regulating HAMP/hepcidin expression upon inflammation or bacterial infection. Through activation of IL6ST-YAP-NOTCH pathway, induces inflammation-induced epithelial regeneration. This Homo sapiens (Human) protein is Interleukin-6.